Consider the following 367-residue polypeptide: Aminomethyltransferase (367 aa).

The protein belongs to the GcvT family. As to quaternary structure, the glycine cleavage system is composed of four proteins: P, T, L and H.

It carries out the reaction N(6)-[(R)-S(8)-aminomethyldihydrolipoyl]-L-lysyl-[protein] + (6S)-5,6,7,8-tetrahydrofolate = N(6)-[(R)-dihydrolipoyl]-L-lysyl-[protein] + (6R)-5,10-methylene-5,6,7,8-tetrahydrofolate + NH4(+). The glycine cleavage system catalyzes the degradation of glycine. This is Aminomethyltransferase from Mycobacterium bovis (strain ATCC BAA-935 / AF2122/97).